We begin with the raw amino-acid sequence, 325 residues long: Phospholipid phosphatase-related protein type 1 (325 aa).

The N-linked (GlcNAc...) asparagine glycan is linked to N5. 3 helical membrane passes run 13 to 33 (IIPC…LLAY), 67 to 87 (FITP…IIFI), and 127 to 147 (FTGV…AGQV). N-linked (GlcNAc...) asparagine glycosylation is present at N163. A run of 3 helical transmembrane segments spans residues 201–218 (AALS…ITST), 230–247 (VLCL…LNRV), and 257–277 (VIAG…CVVH). A Phosphoserine modification is found at S307. N316 carries N-linked (GlcNAc...) asparagine glycosylation.

The protein belongs to the PA-phosphatase related phosphoesterase family.

The protein localises to the cell membrane. The protein resides in the cell projection. Its subcellular location is the neuron projection. In terms of biological role, may play a role in neurite outgrowth and neurogenesis. This is Phospholipid phosphatase-related protein type 1 from Homo sapiens (Human).